Consider the following 134-residue polypeptide: Late embryogenesis abundant protein 6 (134 aa).

A compositionally biased stretch (basic and acidic residues) spans 31 to 45 (ERAMARTKEEKEIAH). Disordered stretches follow at residues 31-53 (ERAM…AKEA) and 80-134 (VTDH…HHHY). Residues 34 to 70 (MARTKEEKEIAHQRRKAKEAEANMDMHMAKAAHAEDK) adopt a coiled-coil conformation. Positions 115–127 (PPQTYHPTYPPTG) are enriched in low complexity.

This sequence belongs to the LEA type 1 family.

Its function is as follows. Involved dehydration tolerance. Involved in the adaptive response of vascular plants to withstand water deficit. May possess chaperone-like activity under water deficit. In Arabidopsis thaliana (Mouse-ear cress), this protein is Late embryogenesis abundant protein 6.